A 406-amino-acid polypeptide reads, in one-letter code: Argininosuccinate synthase (406 aa).

Residues 10-18 and Ala37 contribute to the ATP site; that span reads AYSGGLDTS. L-citrulline is bound by residues Tyr88 and Ser93. Gly118 is a binding site for ATP. L-aspartate contacts are provided by Thr120, Asn124, and Asp125. L-citrulline is bound at residue Asn124. L-citrulline is bound by residues Arg128, Ser179, Ser188, Glu264, and Tyr276.

The protein belongs to the argininosuccinate synthase family. Type 1 subfamily. In terms of assembly, homotetramer.

The protein localises to the cytoplasm. The enzyme catalyses L-citrulline + L-aspartate + ATP = 2-(N(omega)-L-arginino)succinate + AMP + diphosphate + H(+). Its pathway is amino-acid biosynthesis; L-arginine biosynthesis; L-arginine from L-ornithine and carbamoyl phosphate: step 2/3. The polypeptide is Argininosuccinate synthase (Dinoroseobacter shibae (strain DSM 16493 / NCIMB 14021 / DFL 12)).